A 350-amino-acid chain; its full sequence is ALA-interacting subunit 5 (350 aa).

A disordered region spans residues 1 to 23; the sequence is MSSTAASSTVGGGGSSEISGVKK. The residue at position 2 (Ser2) is an N-acetylserine. Residues 50–70 form a helical membrane-spanning segment; sequence VILTFLVAGVVFIPLGVICLF. N-linked (GlcNAc...) asparagine glycans are attached at residues Asn181 and Asn231. The chain crosses the membrane as a helical span at residues 304-324; sequence FLGIAYLTVGSICLFLAVTFA.

It belongs to the CDC50/LEM3 family. In terms of assembly, interacts with ALA2 and ALA3 in a heterologous system. Expressed in roots, leaves, stems, flowers and siliques.

It localises to the golgi apparatus membrane. The protein resides in the prevacuolar compartment membrane. The protein localises to the endoplasmic reticulum membrane. Its function is as follows. Required for the lipid transport activity of the ALA/ALIS P4-ATPase complex. In Arabidopsis thaliana (Mouse-ear cress), this protein is ALA-interacting subunit 5 (ALIS5).